Reading from the N-terminus, the 610-residue chain is Dihydroxy-acid dehydratase (610 aa).

Aspartate 81 lines the Mg(2+) pocket. Residue cysteine 122 participates in [2Fe-2S] cluster binding. Mg(2+)-binding residues include aspartate 123 and lysine 124. An N6-carboxylysine modification is found at lysine 124. Cysteine 193 contributes to the [2Fe-2S] cluster binding site. Glutamate 489 is a binding site for Mg(2+). Serine 515 functions as the Proton acceptor in the catalytic mechanism.

Belongs to the IlvD/Edd family. In terms of assembly, homodimer. The cofactor is [2Fe-2S] cluster. Requires Mg(2+) as cofactor.

The enzyme catalyses (2R)-2,3-dihydroxy-3-methylbutanoate = 3-methyl-2-oxobutanoate + H2O. It catalyses the reaction (2R,3R)-2,3-dihydroxy-3-methylpentanoate = (S)-3-methyl-2-oxopentanoate + H2O. The protein operates within amino-acid biosynthesis; L-isoleucine biosynthesis; L-isoleucine from 2-oxobutanoate: step 3/4. Its pathway is amino-acid biosynthesis; L-valine biosynthesis; L-valine from pyruvate: step 3/4. Functions in the biosynthesis of branched-chain amino acids. Catalyzes the dehydration of (2R,3R)-2,3-dihydroxy-3-methylpentanoate (2,3-dihydroxy-3-methylvalerate) into 2-oxo-3-methylpentanoate (2-oxo-3-methylvalerate) and of (2R)-2,3-dihydroxy-3-methylbutanoate (2,3-dihydroxyisovalerate) into 2-oxo-3-methylbutanoate (2-oxoisovalerate), the penultimate precursor to L-isoleucine and L-valine, respectively. This is Dihydroxy-acid dehydratase from Xylella fastidiosa (strain M12).